Consider the following 236-residue polypeptide: Purine nucleoside phosphorylase DeoD-type (236 aa).

Residue H5 participates in a purine D-ribonucleoside binding. Phosphate is bound by residues G21, R25, R44, and 88–91 (RVGS). A purine D-ribonucleoside is bound by residues 180-182 (EME) and 204-205 (SD). D205 (proton donor) is an active-site residue.

The protein belongs to the PNP/UDP phosphorylase family. Homohexamer; trimer of homodimers.

The enzyme catalyses a purine D-ribonucleoside + phosphate = a purine nucleobase + alpha-D-ribose 1-phosphate. It catalyses the reaction a purine 2'-deoxy-D-ribonucleoside + phosphate = a purine nucleobase + 2-deoxy-alpha-D-ribose 1-phosphate. Functionally, catalyzes the reversible phosphorolytic breakdown of the N-glycosidic bond in the beta-(deoxy)ribonucleoside molecules, with the formation of the corresponding free purine bases and pentose-1-phosphate. In Psychromonas ingrahamii (strain DSM 17664 / CCUG 51855 / 37), this protein is Purine nucleoside phosphorylase DeoD-type.